The following is an 87-amino-acid chain: Small ribosomal subunit protein bS20 (87 aa).

Residues 1–29 are disordered; the sequence is MANTAQARKRARQAVKQNAHNSSQRSTLR. Residues 20 to 29 show a composition bias toward polar residues; sequence HNSSQRSTLR.

It belongs to the bacterial ribosomal protein bS20 family.

Its function is as follows. Binds directly to 16S ribosomal RNA. The sequence is that of Small ribosomal subunit protein bS20 from Herminiimonas arsenicoxydans.